The primary structure comprises 1433 residues: DNA-directed RNA polymerase subunit beta' (1433 aa).

Positions 66, 68, 81, and 84 each coordinate Zn(2+). The disordered stretch occupies residues R328 to S347. A compositionally biased stretch (polar residues) spans K329–D346. 3 residues coordinate Mg(2+): D477, D479, and D481. Zn(2+) is bound by residues C825, C899, C906, and C909.

The protein belongs to the RNA polymerase beta' chain family. In terms of assembly, the RNAP catalytic core consists of 2 alpha, 1 beta, 1 beta' and 1 omega subunit. When a sigma factor is associated with the core the holoenzyme is formed, which can initiate transcription. The cofactor is Mg(2+). Requires Zn(2+) as cofactor.

It catalyses the reaction RNA(n) + a ribonucleoside 5'-triphosphate = RNA(n+1) + diphosphate. Functionally, DNA-dependent RNA polymerase catalyzes the transcription of DNA into RNA using the four ribonucleoside triphosphates as substrates. The chain is DNA-directed RNA polymerase subunit beta' from Christiangramia forsetii (strain DSM 17595 / CGMCC 1.15422 / KT0803) (Gramella forsetii).